A 161-amino-acid polypeptide reads, in one-letter code: Stress response protein YvgO (161 aa).

The N-terminal stretch at M1 to A26 is a signal peptide.

This Bacillus subtilis (strain 168) protein is Stress response protein YvgO (yvgO).